Consider the following 232-residue polypeptide: Noggin (232 aa).

Positions 1–27 (MERCPSLGVTLYALVVVLGLRATPAGG) are cleaved as a signal peptide. N-linked (GlcNAc...) asparagine glycosylation occurs at Asn-62. The segment at 77-96 (GFMATSPPEDRPGGGGGAAG) is disordered. 4 disulfides stabilise this stretch: Cys-155–Cys-192, Cys-178–Cys-228, Cys-184–Cys-230, and Cys-207–Cys-215.

This sequence belongs to the noggin family. Homodimer. Interacts with GDF5; inhibits chondrocyte differentiation.

It is found in the secreted. Inhibitor of bone morphogenetic proteins (BMP) signaling which is required for growth and patterning of the neural tube and somite. Essential for cartilage morphogenesis and joint formation. Inhibits chondrocyte differentiation through its interaction with GDF5 and, probably, GDF6. The sequence is that of Noggin (NOG) from Homo sapiens (Human).